The chain runs to 97 residues: Protein RALF-like 2 (97 aa).

Positions 1–25 (MEARHMLVTILLLSFVFMNIMKVEA) are cleaved as a signal peptide. 2 disulfides stabilise this stretch: Cys-42/Cys-49 and Cys-61/Cys-67.

It belongs to the plant rapid alkalinization factor (RALF) family.

The protein resides in the secreted. In terms of biological role, cell signaling peptide that may regulate plant stress, growth, and development. Mediates a rapid alkalinization of extracellular space by mediating a transient increase in the cytoplasmic Ca(2+) concentration leading to a calcium-dependent signaling events through a cell surface receptor and a concomitant activation of some intracellular mitogen-activated protein kinases. The polypeptide is Protein RALF-like 2 (RALFL2) (Arabidopsis thaliana (Mouse-ear cress)).